The sequence spans 82 residues: Protein transport protein Sec61 subunit beta (82 aa).

Met-1 is modified (N-acetylmethionine). Positions 1–34 are disordered; the sequence is MVGSGAPQRGSAAATASMRRRKPTSGAGGGGASG. Residues 1–55 lie on the Cytoplasmic side of the membrane; it reads MVGSGAPQRGSAAATASMRRRKPTSGAGGGGASGGAAGSMLQFYTDDAPGLKISP. Residues 56-76 form a helical membrane-spanning segment; sequence NVVLIMSIGFIAFVAVLHVMG.

The protein belongs to the SEC61-beta family. Heterotrimeric complex composed of SEC61-alpha, SEC61-beta and SEC61-gamma.

It localises to the endoplasmic reticulum membrane. Necessary for protein translocation in the endoplasmic reticulum. The polypeptide is Protein transport protein Sec61 subunit beta (Arabidopsis thaliana (Mouse-ear cress)).